The primary structure comprises 105 residues: MTASFKAVMIGGVRWYQQRISANTPPCCKYYPTCSNYAIEALERYGAFKGGVLAVLRLLRCRPWSRGGIDDVPQRYSIFYRFSWSKAHEEPRLTPLATTQREAQR.

Belongs to the UPF0161 family.

It is found in the cell membrane. In terms of biological role, could be involved in insertion of integral membrane proteins into the membrane. In Bifidobacterium longum subsp. infantis (strain ATCC 15697 / DSM 20088 / JCM 1222 / NCTC 11817 / S12), this protein is Putative membrane protein insertion efficiency factor.